The primary structure comprises 322 residues: Ornithine carbamoyltransferase (322 aa).

Carbamoyl phosphate contacts are provided by residues 67-70 (STRT), glutamine 94, arginine 118, and 145-148 (HPCQ). L-ornithine is bound by residues asparagine 176, aspartate 240, and 244-245 (SM). Carbamoyl phosphate is bound by residues 280-281 (CL) and arginine 308.

This sequence belongs to the aspartate/ornithine carbamoyltransferase superfamily. OTCase family.

The protein localises to the cytoplasm. The enzyme catalyses carbamoyl phosphate + L-ornithine = L-citrulline + phosphate + H(+). Its pathway is amino-acid biosynthesis; L-arginine biosynthesis; L-arginine from L-ornithine and carbamoyl phosphate: step 1/3. Reversibly catalyzes the transfer of the carbamoyl group from carbamoyl phosphate (CP) to the N(epsilon) atom of ornithine (ORN) to produce L-citrulline. This is Ornithine carbamoyltransferase from Oceanobacillus iheyensis (strain DSM 14371 / CIP 107618 / JCM 11309 / KCTC 3954 / HTE831).